The following is a 74-amino-acid chain: Mitotic-spindle organizing protein 1 (74 aa).

The protein belongs to the MOZART1 family. In terms of assembly, part of the gamma-tubulin complex.

It is found in the cytoplasm. It localises to the cytoskeleton. The protein localises to the microtubule organizing center. The protein resides in the spindle pole body. Functionally, required for gamma-tubulin complex recruitment to the microtubule organizing center (MTOC). In Emericella nidulans (strain FGSC A4 / ATCC 38163 / CBS 112.46 / NRRL 194 / M139) (Aspergillus nidulans), this protein is Mitotic-spindle organizing protein 1.